The sequence spans 343 residues: N-acetyl-gamma-glutamyl-phosphate reductase (343 aa).

Cys150 is a catalytic residue.

Belongs to the NAGSA dehydrogenase family. Type 1 subfamily.

Its subcellular location is the cytoplasm. The enzyme catalyses N-acetyl-L-glutamate 5-semialdehyde + phosphate + NADP(+) = N-acetyl-L-glutamyl 5-phosphate + NADPH + H(+). It participates in amino-acid biosynthesis; L-arginine biosynthesis; N(2)-acetyl-L-ornithine from L-glutamate: step 3/4. Its function is as follows. Catalyzes the NADPH-dependent reduction of N-acetyl-5-glutamyl phosphate to yield N-acetyl-L-glutamate 5-semialdehyde. In Nitrosococcus oceani (strain ATCC 19707 / BCRC 17464 / JCM 30415 / NCIMB 11848 / C-107), this protein is N-acetyl-gamma-glutamyl-phosphate reductase.